The following is a 120-amino-acid chain: UPF0231 protein YacL (120 aa).

Belongs to the UPF0231 family.

The protein is UPF0231 protein YacL of Escherichia coli O139:H28 (strain E24377A / ETEC).